The following is a 417-amino-acid chain: RH-like protein IIR (417 aa).

Transmembrane regions (helical) follow at residues 12-32 (CLPL…YFFT), 44-64 (LVAS…GFGF), 77-97 (VAFS…LDGF), 125-145 (ISVD…MVLV), 172-192 (IYVF…KPLP), 203-223 (TIPS…WPSF), 238-258 (VFNT…GSSL), 265-285 (ISMS…GTSC), 287-307 (LIPS…ISVG), 331-351 (NFSW…VRHT), and 358-378 (MIGF…TIAL).

This sequence belongs to the ammonium transporter (TC 2.A.49) family. Rh subfamily.

The protein localises to the membrane. May be part of an oligomeric complex which is likely to have a transport or channel function in the erythrocyte membrane. The polypeptide is RH-like protein IIR (Pan troglodytes (Chimpanzee)).